The chain runs to 332 residues: 4-hydroxy-3-methylbut-2-enyl diphosphate reductase (332 aa).

Cys34 is a [4Fe-4S] cluster binding site. (2E)-4-hydroxy-3-methylbut-2-enyl diphosphate is bound by residues His63 and His96. Dimethylallyl diphosphate-binding residues include His63 and His96. Isopentenyl diphosphate-binding residues include His63 and His96. Residue Cys118 participates in [4Fe-4S] cluster binding. His146 contacts (2E)-4-hydroxy-3-methylbut-2-enyl diphosphate. Residue His146 participates in dimethylallyl diphosphate binding. His146 is a binding site for isopentenyl diphosphate. Glu148 (proton donor) is an active-site residue. Residue Thr186 participates in (2E)-4-hydroxy-3-methylbut-2-enyl diphosphate binding. Cys216 lines the [4Fe-4S] cluster pocket. The (2E)-4-hydroxy-3-methylbut-2-enyl diphosphate site is built by Ser244, Ser245, Asn246, and Ser289. Dimethylallyl diphosphate is bound by residues Ser244, Ser245, Asn246, and Ser289. Isopentenyl diphosphate-binding residues include Ser244, Ser245, Asn246, and Ser289.

The protein belongs to the IspH family. Requires [4Fe-4S] cluster as cofactor.

It carries out the reaction isopentenyl diphosphate + 2 oxidized [2Fe-2S]-[ferredoxin] + H2O = (2E)-4-hydroxy-3-methylbut-2-enyl diphosphate + 2 reduced [2Fe-2S]-[ferredoxin] + 2 H(+). The enzyme catalyses dimethylallyl diphosphate + 2 oxidized [2Fe-2S]-[ferredoxin] + H2O = (2E)-4-hydroxy-3-methylbut-2-enyl diphosphate + 2 reduced [2Fe-2S]-[ferredoxin] + 2 H(+). The protein operates within isoprenoid biosynthesis; dimethylallyl diphosphate biosynthesis; dimethylallyl diphosphate from (2E)-4-hydroxy-3-methylbutenyl diphosphate: step 1/1. It participates in isoprenoid biosynthesis; isopentenyl diphosphate biosynthesis via DXP pathway; isopentenyl diphosphate from 1-deoxy-D-xylulose 5-phosphate: step 6/6. In terms of biological role, catalyzes the conversion of 1-hydroxy-2-methyl-2-(E)-butenyl 4-diphosphate (HMBPP) into a mixture of isopentenyl diphosphate (IPP) and dimethylallyl diphosphate (DMAPP). Acts in the terminal step of the DOXP/MEP pathway for isoprenoid precursor biosynthesis. In Mycolicibacterium paratuberculosis (strain ATCC BAA-968 / K-10) (Mycobacterium paratuberculosis), this protein is 4-hydroxy-3-methylbut-2-enyl diphosphate reductase.